Reading from the N-terminus, the 88-residue chain is Large ribosomal subunit protein bL31B (88 aa).

It belongs to the bacterial ribosomal protein bL31 family. Type B subfamily. As to quaternary structure, part of the 50S ribosomal subunit.

This chain is Large ribosomal subunit protein bL31B, found in Corynebacterium efficiens (strain DSM 44549 / YS-314 / AJ 12310 / JCM 11189 / NBRC 100395).